The following is a 447-amino-acid chain: Elongation factor 1-alpha (447 aa).

The tr-type G domain maps to 5-230 (KVHINIVVIG…DNINEPKRPS (226 aa)). Residues 14 to 21 (GHVDSGKS) form a G1 region. 14–21 (GHVDSGKS) is a GTP binding site. Lys-55 is modified (N6,N6-dimethyllysine). The G2 stretch occupies residues 70 to 74 (GITID). Lys-79 bears the N6,N6,N6-trimethyllysine mark. The interval 91 to 94 (DAPG) is G3. GTP contacts are provided by residues 91–95 (DAPGH) and 153–156 (NKMD). The G4 stretch occupies residues 153 to 156 (NKMD). Residue Lys-187 is modified to N6,N6,N6-trimethyllysine. The tract at residues 194-196 (SGF) is G5. Lys-261 carries the post-translational modification N6-methyllysine. Residue Glu-289 is modified to 5-glutamyl glycerylphosphorylethanolamine. Lys-306 carries the N6,N6,N6-trimethyllysine modification. Glu-362 is subject to 5-glutamyl glycerylphosphorylethanolamine. Lys-396 is modified (N6,N6,N6-trimethyllysine).

This sequence belongs to the TRAFAC class translation factor GTPase superfamily. Classic translation factor GTPase family. EF-Tu/EF-1A subfamily.

It is found in the cytoplasm. In terms of biological role, this protein promotes the GTP-dependent binding of aminoacyl-tRNA to the A-site of ribosomes during protein biosynthesis. The polypeptide is Elongation factor 1-alpha (Vicia faba (Broad bean)).